A 293-amino-acid chain; its full sequence is Small ribosomal subunit protein uS3 (293 aa).

In terms of domain architecture, KH type-2 spans 39 to 107 (VREYLKAKLK…PVAVNIEEVR (69 aa)). The disordered stretch occupies residues 210-293 (RNDLPAVETP…PATAADGKGE (84 aa)). Residues 219–238 (PRPEEERRPRGPRRDGRPGG) are compositionally biased toward basic and acidic residues.

The protein belongs to the universal ribosomal protein uS3 family. Part of the 30S ribosomal subunit. Forms a tight complex with proteins S10 and S14.

In terms of biological role, binds the lower part of the 30S subunit head. Binds mRNA in the 70S ribosome, positioning it for translation. This chain is Small ribosomal subunit protein uS3, found in Paracidovorax citrulli (strain AAC00-1) (Acidovorax citrulli).